A 294-amino-acid polypeptide reads, in one-letter code: GTP cyclohydrolase FolE2 (294 aa).

Belongs to the GTP cyclohydrolase IV family.

The catalysed reaction is GTP + H2O = 7,8-dihydroneopterin 3'-triphosphate + formate + H(+). It participates in cofactor biosynthesis; 7,8-dihydroneopterin triphosphate biosynthesis; 7,8-dihydroneopterin triphosphate from GTP: step 1/1. Converts GTP to 7,8-dihydroneopterin triphosphate. This Acinetobacter baylyi (strain ATCC 33305 / BD413 / ADP1) protein is GTP cyclohydrolase FolE2.